The sequence spans 397 residues: uncharacterized protein (397 aa).

10 helical membrane passes run 2 to 24 (LNLL…PGIH), 44 to 66 (YIPF…SAFL), 92 to 114 (AIVL…SLFL), 124 to 143 (AFYC…FILY), 150 to 169 (SVWE…AVLY), 173 to 195 (AFNI…INNL), 255 to 277 (FIVS…VIFI), 297 to 319 (INTA…LNLS), 331 to 350 (FKFL…IIGS), and 354 to 373 (YLIY…LLAV).

The protein localises to the cell membrane. This is an uncharacterized protein from Methanocaldococcus jannaschii (strain ATCC 43067 / DSM 2661 / JAL-1 / JCM 10045 / NBRC 100440) (Methanococcus jannaschii).